The primary structure comprises 698 residues: Dual trans-enoyl reductase/FAD-dependent monooxygenase tazHJ (698 aa).

NADP(+) contacts are provided by residues 54 to 57 (STAT), 78 to 81 (SPRH), tyrosine 96, and 279 to 280 (IA). The FAD site is built by glutamate 299, glycine 312, and arginine 372. The active site involves arginine 455. Positions 571 and 584 each coordinate FAD.

In the N-terminal section; belongs to the zinc-containing alcohol dehydrogenase family. The protein in the C-terminal section; belongs to the paxM FAD-dependent monooxygenase family.

It functions in the pathway secondary metabolite biosynthesis. Dual trans-enoyl reductase/FAD-dependent monooxygenase; part of the gene cluster that mediates the biosynthesis of azaterrilone A and other azaphilones, a class of fungal metabolites characterized by a highly oxygenated pyrano-quinone bicyclic core and exhibiting a broad range of bioactivities. The first step of the pathway begins with the non-reducing polyketide synthase tazA that assembles one acetyl-CoA starter unit, five malonyl-CoA units, and catalyzes a series of Claisen condensations, methylation, PT-mediated cyclization, and finally releases the first hexaketide precursor through the R-domain. The tazA product then undergoes reduction on its terminal ketone and the following pyran-ring formation by yet undetermined enzyme(s). Dehydration and enoyl reduction, possibly involving the trans-enoyl reductase tazE leads to the next intermediate. TazD is predicted as an acetyltransferase and might catalyze the acetylation steps leading to the synthesis of azaterrilone A. Azaterrilone A is not the final product of the taz pathway and both the highly reducing polyketide synthase tazB and the dual enzyme tazHJ catalyze late steps of the pathway, leading to the production of the 2 final stereoisomers that contain additional polyketide modification whose structures have still to be determined. This is Dual trans-enoyl reductase/FAD-dependent monooxygenase tazHJ from Aspergillus terreus (strain NIH 2624 / FGSC A1156).